The sequence spans 365 residues: Probable flavin mononucleotide-dependent alkene reductase (365 aa).

Residues 30–32 (PLT), alanine 63, and glutamine 105 each bind FMN. Residue tyrosine 191 is the Proton donor of the active site. FMN contacts are provided by residues arginine 238, serine 303, and 324–325 (GT).

The protein belongs to the NADH:flavin oxidoreductase/NADH oxidase family. Monomer. The cofactor is FMN.

The protein localises to the cytoplasm. The protein resides in the cytosol. Its function is as follows. May function as a flavin mononucleotide (FMN)-dependent alkene reductase on substrates carrying alpha,beta-unsaturated carbonyl groups (ketones, aldehydes, carboxylic acids, esters, lactones or cyclic imides). The catalysis depends on NAD(P)H, which acts as a hydride donor for the reduction. Seems to be involved in metabolic pathways required for efficient replication of amastigotes within macrophages. In terms of biological role, acts as a FMN-dependent nitroreductase that activates anti-leishmanial bicyclic nitroaromatic prodrugs including delamanid, DNDI-VL-2098 and (R)-PA-824, forming toxic products that kill the parasites. The polypeptide is Probable flavin mononucleotide-dependent alkene reductase (Leishmania infantum).